The sequence spans 262 residues: Hydroxyethylthiazole kinase (262 aa).

Met-41 serves as a coordination point for substrate. Arg-117 and Ser-163 together coordinate ATP. Residue Gly-190 participates in substrate binding.

Belongs to the Thz kinase family. Mg(2+) serves as cofactor.

The catalysed reaction is 5-(2-hydroxyethyl)-4-methylthiazole + ATP = 4-methyl-5-(2-phosphooxyethyl)-thiazole + ADP + H(+). It participates in cofactor biosynthesis; thiamine diphosphate biosynthesis; 4-methyl-5-(2-phosphoethyl)-thiazole from 5-(2-hydroxyethyl)-4-methylthiazole: step 1/1. In terms of biological role, catalyzes the phosphorylation of the hydroxyl group of 4-methyl-5-beta-hydroxyethylthiazole (THZ). This Levilactobacillus brevis (strain ATCC 367 / BCRC 12310 / CIP 105137 / JCM 1170 / LMG 11437 / NCIMB 947 / NCTC 947) (Lactobacillus brevis) protein is Hydroxyethylthiazole kinase.